Consider the following 200-residue polypeptide: 3-isopropylmalate dehydratase small subunit (200 aa).

This sequence belongs to the LeuD family. LeuD type 1 subfamily. In terms of assembly, heterodimer of LeuC and LeuD.

The catalysed reaction is (2R,3S)-3-isopropylmalate = (2S)-2-isopropylmalate. The protein operates within amino-acid biosynthesis; L-leucine biosynthesis; L-leucine from 3-methyl-2-oxobutanoate: step 2/4. Catalyzes the isomerization between 2-isopropylmalate and 3-isopropylmalate, via the formation of 2-isopropylmaleate. In Arthrobacter sp. (strain FB24), this protein is 3-isopropylmalate dehydratase small subunit.